We begin with the raw amino-acid sequence, 93 residues long: Mammaglobin-A (93 aa).

Residues Met1–Ala18 form the signal peptide. N-linked (GlcNAc...) asparagine glycans are attached at residues Asn53 and Asn68.

The protein belongs to the secretoglobin family. Lipophilin subfamily. In terms of tissue distribution, mammary gland specific. Over-expressed in breast cancer.

Its subcellular location is the secreted. This Homo sapiens (Human) protein is Mammaglobin-A (SCGB2A2).